A 293-amino-acid polypeptide reads, in one-letter code: uncharacterized protein (293 aa).

This is an uncharacterized protein from Acanthamoeba polyphaga (Amoeba).